The following is a 339-amino-acid chain: Transaldolase (339 aa).

Lys-135 functions as the Schiff-base intermediate with substrate in the catalytic mechanism.

The protein belongs to the transaldolase family. Type 1 subfamily. In terms of assembly, homodimer.

It is found in the cytoplasm. The enzyme catalyses D-sedoheptulose 7-phosphate + D-glyceraldehyde 3-phosphate = D-erythrose 4-phosphate + beta-D-fructose 6-phosphate. Its pathway is carbohydrate degradation; pentose phosphate pathway; D-glyceraldehyde 3-phosphate and beta-D-fructose 6-phosphate from D-ribose 5-phosphate and D-xylulose 5-phosphate (non-oxidative stage): step 2/3. Functionally, transaldolase is important for the balance of metabolites in the pentose-phosphate pathway. This Prochlorococcus marinus (strain MIT 9211) protein is Transaldolase.